Consider the following 292-residue polypeptide: RWD domain-containing protein 2A (292 aa).

Residues 14 to 134 form the RWD domain; the sequence is LEMEMLFSMF…QWLQDNSASY (121 aa).

The chain is RWD domain-containing protein 2A (RWDD2A) from Homo sapiens (Human).